Here is a 107-residue protein sequence, read N- to C-terminus: Putative double-stranded DNA mimic protein PC1_1990 (107 aa).

The protein belongs to the putative dsDNA mimic protein family.

In terms of biological role, may act as a double-stranded DNA (dsDNA) mimic. Probably regulates the activity of a dsDNA-binding protein. In Pectobacterium carotovorum subsp. carotovorum (strain PC1), this protein is Putative double-stranded DNA mimic protein PC1_1990.